The sequence spans 549 residues: Cell pattern formation-associated protein StuA (549 aa).

The 107-residue stretch at 86–192 folds into the HTH APSES-type domain; it reads RVTATLWEDE…HNIGALLYHP (107 aa). A DNA-binding region (H-T-H motif) is located at residues 120–141; it reads GTKLLNVAGMTRGRRDGILKSE. Disordered stretches follow at residues 205–227, 246–288, 332–466, and 514–549; these read AERRKHEGLGGQRPPAPNALPSI, SLAN…DLHR, REED…DHLN, and ASTVAASPSYPSAPVYDTAARPPSAISAPRRQQSFG. Polar residues predominate over residues 246–266; that stretch reads SLANGPQSLASTPQPLANGSQ. Composition is skewed to basic and acidic residues over residues 278-288, 332-346, and 385-395; these read RGREEEEDLHR, REEDDEVHRSAHNAH, and RGRDEDDDHRS. A nuclear localization domain region spans residues 516–545; it reads TVAASPSYPSAPVYDTAARPPSAISAPRRQ. Over residues 532–549 the composition is skewed to low complexity; that stretch reads AARPPSAISAPRRQQSFG.

This sequence belongs to the EFG1/PHD1/stuA family.

The protein resides in the nucleus. Functionally, transcription factor that regulates asexual reproduction. Binds the StuA-response elements (StRE) with the consensus sequence 5'-(A/T)CGCG(T/A)N(A/C)-3' at the promoters of target genes. This is Cell pattern formation-associated protein StuA from Gibberella moniliformis (strain M3125 / FGSC 7600) (Maize ear and stalk rot fungus).